The sequence spans 317 residues: Beta-ketoacyl-[acyl-carrier-protein] synthase III (317 aa).

Residues Cys-112 and His-244 contribute to the active site. The interval 245–249 (QANLR) is ACP-binding. Residue Asn-274 is part of the active site.

This sequence belongs to the thiolase-like superfamily. FabH family. As to quaternary structure, homodimer.

Its subcellular location is the cytoplasm. It carries out the reaction malonyl-[ACP] + acetyl-CoA + H(+) = 3-oxobutanoyl-[ACP] + CO2 + CoA. The protein operates within lipid metabolism; fatty acid biosynthesis. In terms of biological role, catalyzes the condensation reaction of fatty acid synthesis by the addition to an acyl acceptor of two carbons from malonyl-ACP. Catalyzes the first condensation reaction which initiates fatty acid synthesis and may therefore play a role in governing the total rate of fatty acid production. Possesses both acetoacetyl-ACP synthase and acetyl transacylase activities. Its substrate specificity determines the biosynthesis of branched-chain and/or straight-chain of fatty acids. The chain is Beta-ketoacyl-[acyl-carrier-protein] synthase III from Baumannia cicadellinicola subsp. Homalodisca coagulata.